We begin with the raw amino-acid sequence, 182 residues long: ADP-ribosylation factor 1 (182 aa).

Glycine 2 carries N-myristoyl glycine lipidation. GTP is bound by residues 24-31 (GLDAAGKT), 67-71 (DVGGQ), and 126-129 (NKQD).

Belongs to the small GTPase superfamily. Arf family.

The protein resides in the golgi apparatus. The enzyme catalyses GTP + H2O = GDP + phosphate + H(+). Functionally, GTP-binding protein involved in protein trafficking; may modulate vesicle budding and uncoating within the Golgi apparatus. The chain is ADP-ribosylation factor 1 (arfA) from Dictyostelium discoideum (Social amoeba).